We begin with the raw amino-acid sequence, 79 residues long: Sec-independent protein translocase protein TatA (79 aa).

Residues 1–21 (MGSFSIWHWLIVLAIVVLVFG) form a helical membrane-spanning segment. The interval 43–79 (VKDGSTSTDTPAAAPGQVAGQTAADKTTIDVEAKQKG) is disordered. The segment covering 69–79 (TTIDVEAKQKG) has biased composition (basic and acidic residues).

It belongs to the TatA/E family. In terms of assembly, the Tat system comprises two distinct complexes: a TatABC complex, containing multiple copies of TatA, TatB and TatC subunits, and a separate TatA complex, containing only TatA subunits. Substrates initially bind to the TatABC complex, which probably triggers association of the separate TatA complex to form the active translocon.

Its subcellular location is the cell inner membrane. In terms of biological role, part of the twin-arginine translocation (Tat) system that transports large folded proteins containing a characteristic twin-arginine motif in their signal peptide across membranes. TatA could form the protein-conducting channel of the Tat system. This Delftia acidovorans (strain DSM 14801 / SPH-1) protein is Sec-independent protein translocase protein TatA.